A 538-amino-acid chain; its full sequence is Atos homolog protein B (538 aa).

Residues 1 to 18 (MRHVQAEPSPSSEPEAGP) are compositionally biased toward low complexity. Disordered regions lie at residues 1–114 (MRHV…LGVA) and 133–300 (TSSW…VLDP). Residues 227–238 (HTPPGPGPPGPC) are compositionally biased toward pro residues. Phosphoserine occurs at positions 254 and 255. Residues 348–430 (LLGNFEESLL…VPKVGTVQVT (83 aa)) form a required for macropage invasion region. The transactivation domain 1 (TAD1) stretch occupies residues 436–444 (QTVVKMFLV).

The protein belongs to the ATOS family.

It is found in the nucleus. Functionally, transcription regulator that may syncronize transcriptional and translational programs. The chain is Atos homolog protein B from Homo sapiens (Human).